The chain runs to 101 residues: Small ribosomal subunit protein bS18c (101 aa).

It belongs to the bacterial ribosomal protein bS18 family. Part of the 30S ribosomal subunit.

The protein resides in the plastid. The protein localises to the chloroplast. This chain is Small ribosomal subunit protein bS18c, found in Lactuca sativa (Garden lettuce).